A 352-amino-acid chain; its full sequence is Keratocan (352 aa).

The first 20 residues, 1–20, serve as a signal peptide directing secretion; it reads MAGTICFIMWVLFITDTVWS. Residues 33 to 71 form the LRRNT domain; the sequence is DDWTIHDFECPMECFCPPSFPTALYCENRGLKEIPAIPS. 2 disulfides stabilise this stretch: cysteine 42–cysteine 48 and cysteine 46–cysteine 58. LRR repeat units lie at residues 72 to 93, 96 to 117, 122 to 142, 143 to 164, 167 to 180, 193 to 213, 214 to 235, 238 to 258, 263 to 282, and 283 to 304; these read RIWY…PFEN, QLRW…KGAL, KLLF…PLPR, SLEQ…TFSN, NLTL…KLVD, NLMQ…RLPA, NTMQ…YFNV, KVAF…PSRG, SILD…RISA, and HLQH…VICP. N-linked (GlcNAc...) (keratan sulfate) asparagine glycosylation occurs at asparagine 93. N-linked (GlcNAc...) (keratan sulfate) asparagine glycosylation occurs at asparagine 167. A glycan (N-linked (GlcNAc...) asparagine) is linked at asparagine 222. Asparagine 298 carries N-linked (GlcNAc...) asparagine glycosylation. Cysteine 303 and cysteine 343 form a disulfide bridge.

The protein belongs to the small leucine-rich proteoglycan (SLRP) family. SLRP class II subfamily. In terms of processing, binds keratan sulfate chains. In terms of tissue distribution, cornea (at protein level). Increased expression in the stroma of keratoconus corneas. Also detected in trachea, and in low levels, in intestine, skeletal muscle, ovary, lung and putamen.

It localises to the secreted. Its subcellular location is the extracellular space. The protein resides in the extracellular matrix. May be important in developing and maintaining corneal transparency and for the structure of the stromal matrix. This is Keratocan (KERA) from Homo sapiens (Human).